We begin with the raw amino-acid sequence, 298 residues long: Mitochondrial basic amino acids transporter (298 aa).

The next 6 membrane-spanning stretches (helical) occupy residues alanine 2–phenylalanine 22, glycine 61–glycine 81, phenylalanine 96–alanine 116, glycine 153–tyrosine 172, leucine 187–threonine 207, and leucine 255–tyrosine 275. 3 Solcar repeats span residues alanine 2–alanine 86, aspartate 90–alanine 178, and aspartate 185–tyrosine 275.

It belongs to the mitochondrial carrier (TC 2.A.29) family.

It is found in the mitochondrion inner membrane. The catalysed reaction is L-lysine(out) + L-arginine(in) = L-lysine(in) + L-arginine(out). It catalyses the reaction L-histidine(out) + L-arginine(in) = L-histidine(in) + L-arginine(out). It carries out the reaction L-ornithine(in) + L-arginine(out) = L-ornithine(out) + L-arginine(in). The enzyme catalyses L-homoarginine(in) + L-arginine(out) = L-homoarginine(out) + L-arginine(in). The catalysed reaction is N(omega)-methyl-L-arginine(in) + L-arginine(out) = N(omega)-methyl-L-arginine(out) + L-arginine(in). It catalyses the reaction L-arginine(in) = L-arginine(out). It carries out the reaction L-lysine(in) = L-lysine(out). The enzyme catalyses L-ornithine(in) = L-ornithine(out). The catalysed reaction is L-histidine(out) = L-histidine(in). Functionally, mitochondrial transporter of arginine, lysine, homoarginine, methylarginine and, to a much lesser extent, ornithine and histidine. Does not transport carnitine nor acylcarnitines. Functions by both counter-exchange and uniport mechanisms. Plays a physiological role in the import of basic amino acids into mitochondria for mitochondrial protein synthesis and amino acid degradation. In Bos taurus (Bovine), this protein is Mitochondrial basic amino acids transporter (SLC25A29).